The primary structure comprises 452 residues: FERM domain-containing protein 8 (452 aa).

Positions 28 to 374 (MDVIIYLIND…YCIELSQSTE (347 aa)) constitute an FERM domain. A compositionally biased stretch (polar residues) spans 373-387 (TESPASDSTPGNSQL). A disordered region spans residues 373-395 (TESPASDSTPGNSQLSEKRSKLK).

It is found in the cytoplasm. The protein resides in the cytosol. It localises to the cell membrane. Functionally, promotes the cell surface stability of RHBDF1 and RHBDF2 and prevents their degradation via the endolysosomal pathway. By acting on RHBDF proteins, involved in ADAM17-mediated ligand shedding. May negatively regulate Wnt signaling. This Xenopus laevis (African clawed frog) protein is FERM domain-containing protein 8 (frmd8).